The chain runs to 154 residues: Protein FasC (154 aa).

This sequence belongs to the periplasmic pilus chaperone family.

Its function is as follows. Could be required for the biogenesis of a putative fimbria. The protein is Protein FasC (fasC) of Escherichia coli.